The primary structure comprises 163 residues: Gas vesicle protein H2 (163 aa).

The tract at residues 57–92 (LGSDARSPSTPAGNADDAGDAETAHIETRASDDSDD) is disordered. The span at 78-88 (ETAHIETRASD) shows a compositional bias: basic and acidic residues.

The protein belongs to the gas vesicle GvpH family. In terms of assembly, gvpF to GvpM interact with each other in vitro, and may form multi-subunit complex(es). Interacts with GvpC. Might interact with GvpA.

It localises to the gas vesicle. The protein resides in the cytoplasm. Its function is as follows. A minor component of the gas vesicle, also found in soluble extracts. Proteins GvpF to GvpM might be involved in nucleating gas vesicle formation. Gas vesicles are hollow, gas filled proteinaceous nanostructures found in several microbial planktonic microorganisms. They allow positioning of halobacteria at the optimal depth for growth in the poorly aerated, shallow brine pools of their habitat. Expression of 2 c-vac DNA fragments containing 2 divergently transcribed regions (gvpE-gvpF-gvpG-gvpH-gvpI-gvpJ-gvpK-gvpL-gvpM and gvpA-gvpC-gvpN-gvpO) allows H.volcanii to produce gas vesicles. In Halobacterium salinarum (strain ATCC 700922 / JCM 11081 / NRC-1) (Halobacterium halobium), this protein is Gas vesicle protein H2.